We begin with the raw amino-acid sequence, 52 residues long: uncharacterized protein (52 aa).

This is an uncharacterized protein from Halalkalibacterium halodurans (strain ATCC BAA-125 / DSM 18197 / FERM 7344 / JCM 9153 / C-125) (Bacillus halodurans).